The sequence spans 414 residues: Serine hydroxymethyltransferase (414 aa).

(6S)-5,6,7,8-tetrahydrofolate contacts are provided by residues leucine 118 and 122-124 (GHL). Residue lysine 227 is modified to N6-(pyridoxal phosphate)lysine. (6S)-5,6,7,8-tetrahydrofolate contacts are provided by residues glutamate 240 and 350–352 (SPF).

The protein belongs to the SHMT family. In terms of assembly, homodimer. Requires pyridoxal 5'-phosphate as cofactor.

Its subcellular location is the cytoplasm. It carries out the reaction (6R)-5,10-methylene-5,6,7,8-tetrahydrofolate + glycine + H2O = (6S)-5,6,7,8-tetrahydrofolate + L-serine. It functions in the pathway one-carbon metabolism; tetrahydrofolate interconversion. It participates in amino-acid biosynthesis; glycine biosynthesis; glycine from L-serine: step 1/1. In terms of biological role, catalyzes the reversible interconversion of serine and glycine with tetrahydrofolate (THF) serving as the one-carbon carrier. This reaction serves as the major source of one-carbon groups required for the biosynthesis of purines, thymidylate, methionine, and other important biomolecules. Also exhibits THF-independent aldolase activity toward beta-hydroxyamino acids, producing glycine and aldehydes, via a retro-aldol mechanism. This chain is Serine hydroxymethyltransferase, found in Bacillus cereus (strain ZK / E33L).